The sequence spans 555 residues: CTP synthase (555 aa).

Positions 1 to 267 (MAKFVFVTGG…CKEVLDCLDL (267 aa)) are amidoligase domain. CTP is bound at residue S13. S13 is a binding site for UTP. ATP is bound by residues 14–19 (SIGKGI) and D71. Positions 71 and 141 each coordinate Mg(2+). CTP is bound by residues 148–150 (DIE), 188–193 (KTKPTQ), and K224. Residues 188–193 (KTKPTQ) and K224 contribute to the UTP site. Positions 292-534 (KVALVGKYVQ…IQAAQIRVPS (243 aa)) constitute a Glutamine amidotransferase type-1 domain. G354 is a binding site for L-glutamine. The active-site Nucleophile; for glutamine hydrolysis is C381. Residues 382 to 385 (LGMQ), E405, and R462 contribute to the L-glutamine site. Catalysis depends on residues H507 and E509. The segment at 536–555 (PSEAFNPQSKIIEKKSLEQQ) is disordered. The segment covering 546–555 (IIEKKSLEQQ) has biased composition (basic and acidic residues).

It belongs to the CTP synthase family. Homotetramer.

It carries out the reaction UTP + L-glutamine + ATP + H2O = CTP + L-glutamate + ADP + phosphate + 2 H(+). It catalyses the reaction L-glutamine + H2O = L-glutamate + NH4(+). The catalysed reaction is UTP + NH4(+) + ATP = CTP + ADP + phosphate + 2 H(+). Its pathway is pyrimidine metabolism; CTP biosynthesis via de novo pathway; CTP from UDP: step 2/2. With respect to regulation, allosterically activated by GTP, when glutamine is the substrate; GTP has no effect on the reaction when ammonia is the substrate. The allosteric effector GTP functions by stabilizing the protein conformation that binds the tetrahedral intermediate(s) formed during glutamine hydrolysis. Inhibited by the product CTP, via allosteric rather than competitive inhibition. In terms of biological role, catalyzes the ATP-dependent amination of UTP to CTP with either L-glutamine or ammonia as the source of nitrogen. Regulates intracellular CTP levels through interactions with the four ribonucleotide triphosphates. The chain is CTP synthase from Prochlorococcus marinus (strain NATL1A).